A 1368-amino-acid polypeptide reads, in one-letter code: DNA-directed RNA polymerase subunit beta (1368 aa).

The protein belongs to the RNA polymerase beta chain family. As to quaternary structure, the RNAP catalytic core consists of 2 alpha, 1 beta, 1 beta' and 1 omega subunit. When a sigma factor is associated with the core the holoenzyme is formed, which can initiate transcription.

The catalysed reaction is RNA(n) + a ribonucleoside 5'-triphosphate = RNA(n+1) + diphosphate. In terms of biological role, DNA-dependent RNA polymerase catalyzes the transcription of DNA into RNA using the four ribonucleoside triphosphates as substrates. The protein is DNA-directed RNA polymerase subunit beta of Burkholderia lata (strain ATCC 17760 / DSM 23089 / LMG 22485 / NCIMB 9086 / R18194 / 383).